The chain runs to 134 residues: Histone H2A (134 aa).

The span at methionine 1–alanine 11 shows a compositional bias: gly residues. The interval methionine 1–glycine 25 is disordered. An N6-acetyllysine mark is found at lysine 6 and lysine 10. Glutamine 107 carries the N5-methylglutamine modification. Position 131 is a phosphoserine (serine 131). The short motif at serine 131–glutamine 132 is the [ST]-Q motif element.

The protein belongs to the histone H2A family. The nucleosome is a histone octamer containing two molecules each of H2A, H2B, H3 and H4 assembled in one H3-H4 heterotetramer and two H2A-H2B heterodimers. The octamer wraps approximately 147 bp of DNA. Post-translationally, phosphorylated to form H2AS128ph (gamma-H2A) in response to DNA double-strand breaks (DSBs) generated by exogenous genotoxic agents and by stalled replication forks. Phosphorylation is dependent on the DNA damage checkpoint kinases mec-1/ATR and tel-1/ATM, spreads on either side of a detected DSB site and may mark the surrounding chromatin for recruitment of proteins required for DNA damage signaling and repair. Gamma-H2A is removed from the DNA prior to the strand invasion-primer extension step of the repair process and subsequently dephosphorylated. Dephosphorylation is necessary for efficient recovery from the DNA damage checkpoint. Acetylated by esa-1 to form H2AK4ac and H2AK7ac.

It is found in the nucleus. It localises to the chromosome. In terms of biological role, core component of nucleosome which plays a central role in DNA double strand break (DSB) repair. Nucleosomes wrap and compact DNA into chromatin, limiting DNA accessibility to the cellular machineries which require DNA as a template. Histones thereby play a central role in transcription regulation, DNA repair, DNA replication and chromosomal stability. DNA accessibility is regulated via a complex set of post-translational modifications of histones, also called histone code, and nucleosome remodeling. The protein is Histone H2A (hh2a) of Neurospora crassa (strain ATCC 24698 / 74-OR23-1A / CBS 708.71 / DSM 1257 / FGSC 987).